The sequence spans 254 residues: MIRILLSNDDGISAPGIQTLASALRGFAQVQIVAPDRNRSGASNALTLDSALRITTLSNGDIAVQQGTPTDCVYLGVNALMRPRPDIVVSGINAGPNLGDDVIYSGTVAAAMEGRHLGYPALAVSLNGHQHYDTAAAVTCRLLRALQRKPLRTGKILNINVPDLPLAEIKGIRVTRCGSRHPAEQVFCQQDPRGQDLYWIGPPGEKYDAGPDTDFAAVEQGYVSITPLQVDLTAYMAQEVVESWLANTEVDGEW.

Positions 9, 10, 40, and 93 each coordinate a divalent metal cation.

The protein belongs to the SurE nucleotidase family. It depends on a divalent metal cation as a cofactor.

It localises to the cytoplasm. It catalyses the reaction a ribonucleoside 5'-phosphate + H2O = a ribonucleoside + phosphate. The enzyme catalyses a ribonucleoside 3'-phosphate + H2O = a ribonucleoside + phosphate. It carries out the reaction [phosphate](n) + H2O = [phosphate](n-1) + phosphate + H(+). Functionally, nucleotidase with a broad substrate specificity as it can dephosphorylate various ribo- and deoxyribonucleoside 5'-monophosphates and ribonucleoside 3'-monophosphates with highest affinity to 3'-AMP. Also hydrolyzes polyphosphate (exopolyphosphatase activity) with the preference for short-chain-length substrates (P20-25). Might be involved in the regulation of dNTP and NTP pools, and in the turnover of 3'-mononucleotides produced by numerous intracellular RNases (T1, T2, and F) during the degradation of various RNAs. In Yersinia pestis bv. Antiqua (strain Antiqua), this protein is 5'/3'-nucleotidase SurE.